The chain runs to 341 residues: Transcription factor VIP1 (341 aa).

Disordered stretches follow at residues 1–33 (MEGGGRGPNQTILSEIEHMPEAPRQRISHHRRA), 59–106 (SLDF…PEAR), and 135–156 (SSGEKKKGNHHHSRSNSMDGEM). Positions 1-162 (MEGGGRGPNQ…DGEMSSASFN (162 aa)) are necessary and sufficient for transient T-DNA transformation end expression. Positions 15–24 (EIEHMPEAPR) are enriched in basic and acidic residues. The span at 71–80 (QSQQQPQASP) shows a compositional bias: low complexity. A Phosphoserine modification is found at Ser-79. Residues 163–341 (IESILASVSG…PSYMDFTKRG (179 aa)) form an involved in homomultimerization and histone H2A binding region. Positions 194–257 (DPKRAKRILA…SELNTENKHL (64 aa)) constitute a bZIP domain. A basic motif region spans residues 196–217 (KRAKRILANRQSAARSKERKIR). The short motif at 198–205 (AKRILANR) is the Nuclear localization signal element. Residues 222-257 (LERKVQTLQNEATTLSAQVTMLQRGTSELNTENKHL) form a leucine-zipper region. The segment covering 307-331 (SQQSAMNQFGNKTNQQMSTNGQPSL) has biased composition (polar residues). The tract at residues 307–341 (SQQSAMNQFGNKTNQQMSTNGQPSLPSYMDFTKRG) is disordered.

Belongs to the bZIP family. In terms of assembly, forms homomultimers. Interacts with Agrobacterium tumefaciens VirE2 and mediates its translocation to the host nucleus. Binds to VIP2. Forms a complex made of Agrobacterium VirE2, VIP1, VIP2 and single-stranded DNA (ssDNA). The interaction with KAP1 mediates its nuclear import. Binds to the H2A histone RAT5. Interacts with MPK3 and Agrobacterium virF. Forms a complex made of VIP1, VBF and Agrobacterium virE2. Interacts with SCF(VBF) E3 ubiquitin ligase complex. Binds directly to VBF. Forms heterodimers with BZIP34 and BZIP61. Phosphorylated by MPK3. This phosphorylation promotes nuclear localization. In terms of tissue distribution, mostly expressed in dividing cells, present in leaves, roots and seedlings.

The protein resides in the cytoplasm. It localises to the nucleus. Its function is as follows. Transcription activator that binds specifically to the VIP1 response elements (VREs) DNA sequence 5'-ACNGCT-3' found in some stress genes (e.g. TRX8 and MYB44), when phosphorylated/activated by MPK3. Required for Agrobacterium VirE2 nuclear import and tumorigenicity. Promotes transient expression of T-DNA in early stages by interacting with VirE2 in complex with the T-DNA and facilitating its translocation to the nucleus, and mediates stable genetic transformation by Agrobacterium by binding H2A histone. Prevents cell differentiation and shoot formation. Limits sulfate utilization efficiency (SUE) and sulfate uptake, especially in low-sulfur conditions. Plays a role in osmosensory response by binding to the 5'-AGCTGT/G-3' DNA sequence found in the promoters of the hypoosmolarity-responsive genes CYP707A1 and CYP707A3. Involved in the negative regulation of touch-induced root bending and salt-dependent root bending. The chain is Transcription factor VIP1 from Arabidopsis thaliana (Mouse-ear cress).